The following is a 935-amino-acid chain: Phosphoenolpyruvate carboxylase (935 aa).

Active-site residues include His161 and Lys593.

It belongs to the PEPCase type 1 family. Mg(2+) serves as cofactor.

It catalyses the reaction oxaloacetate + phosphate = phosphoenolpyruvate + hydrogencarbonate. Its function is as follows. Forms oxaloacetate, a four-carbon dicarboxylic acid source for the tricarboxylic acid cycle. The protein is Phosphoenolpyruvate carboxylase of Mycolicibacterium paratuberculosis (strain ATCC BAA-968 / K-10) (Mycobacterium paratuberculosis).